The following is a 439-amino-acid chain: Transcription factor pydF (439 aa).

A compositionally biased stretch (basic and acidic residues) spans 1–18 (MGRPQRADKQRRETDGPQ). Disordered regions lie at residues 1–53 (MGRP…GYAR), 143–177 (HVEK…QAVE), and 239–262 (AFRD…MQQH). Polar residues predominate over residues 20 to 35 (SRPSLTQAQKNSTTIR). The span at 143-153 (HVEKATAERPG) shows a compositional bias: basic and acidic residues. Residues 157 to 172 (SSSPSSSLLRTSSSPS) show a composition bias toward low complexity. Over residues 243–260 (GQNNGTSRPNTAASQNMQ) the composition is skewed to polar residues.

The protein localises to the nucleus. In terms of biological role, transcription factor; part of the gene cluster that mediates the biosynthesis of pyrrocidines, fungal natural products containing a macrocyclic para-cyclophane connected to a decahydrofluorene ring system that show potent antibiotic activities toward Gram-negative bacteria. The protein is Transcription factor pydF of Acremonium sp.